We begin with the raw amino-acid sequence, 569 residues long: Rab GTPase-binding effector protein 2 (569 aa).

Disordered regions lie at residues 1–41 (MAAA…GELS), 180–265 (IQRR…ETAS), and 388–411 (RAEQ…ESLP). Ala-2 is subject to N-acetylalanine. Residues 34 to 187 (EAESGELSRL…QEIQRRPRHA (154 aa)) adopt a coiled-coil conformation. 2 positions are modified to phosphoserine: Ser-189 and Ser-193. Residue Ser-200 is modified to Phosphoserine; by GSK3-alpha. At Ser-204 the chain carries Phosphoserine. 2 stretches are compositionally biased toward low complexity: residues 245–257 (SSSS…QGLS) and 393–403 (PSSAPQGSQQE). Residues 289–523 (DTQWEQLQTE…LQAELETSEQ (235 aa)) adopt a coiled-coil conformation.

The protein belongs to the rabaptin family. Heterodimer with RABGEF1. The dimer binds RAB5A that has been activated by GTP-binding. Interacts with SDCCAG8; this interaction is important for ciliogenesis regulation. Interacts with RAB4A; this interaction may mediate VEGFR2 cell surface expression.

The protein localises to the cytoplasm. Its subcellular location is the early endosome. The protein resides in the cytoskeleton. It is found in the microtubule organizing center. It localises to the centrosome. The protein localises to the cilium basal body. Its function is as follows. Plays a role in membrane trafficking and in homotypic early endosome fusion. Participates in arteriogenesis by regulating vascular endothelial growth factor receptor 2/VEGFR2 cell surface expression and endosomal trafficking. By interacting with SDCCAG8, localizes to centrosomes and plays a critical role in ciliogenesis. This chain is Rab GTPase-binding effector protein 2 (RABEP2), found in Homo sapiens (Human).